The following is a 410-amino-acid chain: Lipid droplet-regulating VLDL assembly factor AUP1 (410 aa).

Met1 is modified (N-acetylmethionine). At 1–20 (MELPSGPGPERLFDSHRLPG) the chain is on the cytoplasmic side. Phosphoserine is present on Ser5. The stretch at 21–41 (DCFLLLVLLLYAPVGFCLLVL) is an intramembrane region. Topologically, residues 42–410 (RLFLGIHVFL…FTERRAQEAD (369 aa)) are cytoplasmic. Residues 255 to 295 (TGTRLTPADKAEHMKRQRHPRLRPQSAQSSFPPSPGPSPDV) form a disordered region. Ser288 and Ser292 each carry phosphoserine. Residues 296-338 (QLATLAQRVKEVLPHVPLGVIQRDLAKTGCVDLTITNLLEGAV) enclose the CUE domain. The interval 350–369 (QSLPTASASKFPSSGPVTPQ) is disordered. Residue Ser363 is modified to Phosphoserine. Position 367 is a phosphothreonine (Thr367).

Belongs to the AUP1 family. In terms of assembly, identified in a complex that contains SEL1L, OS9, FAF2/UBXD8, UBE2J1/UBC6E and AUP1. Interacts with the cytoplasmic tail of ITGA2B, ITGA1, ITGA2, ITGA5, ITGAV and ITGAM. Interacts (via C-terminus) with ubiquitin-conjugating enzyme UBE2G2; the interaction recruits UBE2G2 to lipid droplets. Interacts with ubiquitin ligases AMFR/gp78 and RNF139/TRC8; this promotes interaction of UBE2G2 with AMFR and RNF139. Interacts with apolipoprotein APOB. As to quaternary structure, (Microbial infection) Interacts with Dengue virus NS4A; the interaction occurs in the presence of Dengue virus NS4B and induces lipophagy which facilitates production of virus progeny. Monoubiquitinated and diubiquitinated. Post-translationally, (Microbial infection) Not ubiquitinated following Dengue virus infection. In terms of tissue distribution, detected in blood platelets and leukocytes (at protein level). Ubiquitous. Highly expressed in placenta, liver, kidney, skeletal muscle, heart and brain.

Its subcellular location is the endoplasmic reticulum membrane. It is found in the lipid droplet. It localises to the cytoplasmic vesicle. The protein resides in the autophagosome. Plays a role in the translocation of terminally misfolded proteins from the endoplasmic reticulum lumen to the cytoplasm and their degradation by the proteasome. Plays a role in lipid droplet formation. Induces lipid droplet clustering. Recruits ubiquitin-conjugating enzyme UBE2G2 to lipid droplets which facilitates its interaction with ubiquitin ligases AMFR/gp78 and RNF139/TRC8, leading to sterol-induced ubiquitination of HMGCR and its subsequent proteasomal degradation. Also required for the degradation of INSIG1, SREBF1 and SREBF2. Plays a role in regulating assembly and secretion of very low density lipoprotein particles and stability of apolipoprotein APOB. Its function is as follows. (Microbial infection) Following Dengue virus infection, required for induction of lipophagy which facilitates production of virus progeny particles. The chain is Lipid droplet-regulating VLDL assembly factor AUP1 from Homo sapiens (Human).